The primary structure comprises 262 residues: Spindlin-Z (262 aa).

A disordered region spans residues 1–50 (MKTPFGKSPGQRSRADAGHAGVSASMMKKRTSHKKHRNNVGPSKPISQPR). Residues 27–38 (MKKRTSHKKHRN) show a composition bias toward basic residues.

It belongs to the SPIN/STSY family. In terms of tissue distribution, expressed in several tissues including testis.

Its subcellular location is the nucleus. Functionally, may play a role in mitosis. This chain is Spindlin-Z (SPINZ), found in Gallus gallus (Chicken).